The sequence spans 79 residues: MPHTLPDISQCIRQNLEQYFKDLNGTEPCGVYDMVLHQVEKPLLVCVMEQCGGNQSKASVMLGLNRNTLRKKLIQHGLL.

The H-T-H motif DNA-binding region spans 55 to 74 (QSKASVMLGLNRNTLRKKLI).

The protein belongs to the transcriptional regulatory Fis family.

This is Putative Fis-like DNA-binding protein from Neisseria meningitidis serogroup A / serotype 4A (strain DSM 15465 / Z2491).